The following is a 415-amino-acid chain: Esterase FrsA (415 aa).

The protein belongs to the FrsA family. As to quaternary structure, monomer in solution. Homodimer. Forms a 1:1 complex with the unphosphorylated form of the EIIA component of the glucose-specific PTS system (IIAGlc).

It catalyses the reaction a carboxylic ester + H2O = an alcohol + a carboxylate + H(+). Its function is as follows. Catalyzes the hydrolysis of esters. In vitro, prefers short chain alkanoate ester as substrate. Displays highest activity towards p-nitrophenyl acetate (pNPA). Has weaker activity towards p-nitrophenyl butyrate (pNPB). The polypeptide is Esterase FrsA (Vibrio vulnificus (strain CMCP6)).